Consider the following 504-residue polypeptide: Maturase K (504 aa).

This sequence belongs to the intron maturase 2 family. MatK subfamily.

The protein localises to the plastid. It localises to the chloroplast. Its function is as follows. Usually encoded in the trnK tRNA gene intron. Probably assists in splicing its own and other chloroplast group II introns. This is Maturase K from Fagus crenata (Japanese beech).